Consider the following 345-residue polypeptide: L-threonine 3-dehydrogenase (345 aa).

C38 contacts Zn(2+). Residues T40 and H43 each act as charge relay system in the active site. The Zn(2+) site is built by H63, E64, C93, C96, C99, and C107. NAD(+) is bound by residues I176, D196, R201, 263 to 265 (LGT), and 287 to 288 (VT).

Belongs to the zinc-containing alcohol dehydrogenase family. In terms of assembly, homotetramer. Requires Zn(2+) as cofactor.

The protein localises to the cytoplasm. The enzyme catalyses L-threonine + NAD(+) = (2S)-2-amino-3-oxobutanoate + NADH + H(+). It functions in the pathway amino-acid degradation; L-threonine degradation via oxydo-reductase pathway; glycine from L-threonine: step 1/2. Functionally, catalyzes the NAD(+)-dependent oxidation of L-threonine to 2-amino-3-ketobutyrate. This is L-threonine 3-dehydrogenase from Cutibacterium acnes (strain DSM 16379 / KPA171202) (Propionibacterium acnes).